Reading from the N-terminus, the 629-residue chain is Methionine--tRNA ligase (629 aa).

Residues 10 to 20 (YYVNSEPHIGS) carry the 'HIGH' region motif. Residues Cys125, Cys128, Cys146, and Cys149 each contribute to the Zn(2+) site. The short motif at 297 to 301 (KISKS) is the 'KMSKS' region element. Lys300 lines the ATP pocket. One can recognise a tRNA-binding domain in the interval 529-629 (DFSKVDLRIA…GEITPGAKVS (101 aa)).

Belongs to the class-I aminoacyl-tRNA synthetase family. MetG type 2A subfamily. As to quaternary structure, homodimer. The cofactor is Zn(2+).

It is found in the cytoplasm. The enzyme catalyses tRNA(Met) + L-methionine + ATP = L-methionyl-tRNA(Met) + AMP + diphosphate. Is required not only for elongation of protein synthesis but also for the initiation of all mRNA translation through initiator tRNA(fMet) aminoacylation. The sequence is that of Methionine--tRNA ligase (metG) from Thermotoga maritima (strain ATCC 43589 / DSM 3109 / JCM 10099 / NBRC 100826 / MSB8).